Here is a 228-residue protein sequence, read N- to C-terminus: Large ribosomal subunit protein uL3 (228 aa).

The disordered stretch occupies residues 135 to 159; it reads MKSQRASHGNSRSHNVPGSIGMAQD. Over residues 140-150 the composition is skewed to polar residues; sequence ASHGNSRSHNV. At Gln-158 the chain carries N5-methylglutamine.

The protein belongs to the universal ribosomal protein uL3 family. In terms of assembly, part of the 50S ribosomal subunit. Forms a cluster with proteins L14 and L19. Post-translationally, methylated by PrmB.

Its function is as follows. One of the primary rRNA binding proteins, it binds directly near the 3'-end of the 23S rRNA, where it nucleates assembly of the 50S subunit. This is Large ribosomal subunit protein uL3 from Albidiferax ferrireducens (strain ATCC BAA-621 / DSM 15236 / T118) (Rhodoferax ferrireducens).